The sequence spans 478 residues: MDTSDLFASCRKGDVGRVRYLLEQRDVEVNVRDKWDSTPLYYACLCGHEELVLYLLANGARCEANTFDGERCLYGALSDPIRRALRDYKQVTASCRRRDYYDDFLQRLLEQGIHSDVVFVVHGKPFRVHRCVLGARSAYFANMLDTKWKGKSVVVLRHPLINPVAFGALLQYLYTGRLDIGVEHVSDCERLAKQCQLWDLLSDLEAKCEKVSEFVASKPGTCVKVLTIEPPPADPRLREDMALLADCALPPELRGDLWELPFPCPDGFNSCPDICFRVAGCSFLCHKAFFCGRSDYFRALLDDHFRESEEPATSGGPPAVTLHGISPDVFTHVLYYMYSDHTELSPEAAYDVLSVADMYLLPGLKRLCGRSLAQMLDEDTVVGVWRVAKLFRLARLEDQCTEYMAKVIEKLVEREDFVEAVKEEAAAVAARQETDSIPLVDDIRFHVASTVQTYSAIEEAQQRLRALEDLLVSIGLDC.

ANK repeat units lie at residues 1–31 and 35–64; these read MDTSDLFASCRKGDVGRVRYLLEQRDVEVNV and WDSTPLYYACLCGHEELVLYLLANGARCEA. 2 consecutive BTB domains span residues 115–182 and 272–346; these read SDVV…DIGV and PDIC…ELSP. Residues 451-477 are a coiled coil; sequence VQTYSAIEEAQQRLRALEDLLVSIGLD.

As to expression, ubiquitously expressed in all fetal tissues examined including heart, brain, liver, and kidney. Also expressed at lower levels in both adult heart and hypertrophic heart.

The protein resides in the cytoplasm. May act as a mediator of the PTEN growth-suppressive signaling pathway. May play a role in developmental processes. The chain is Ankyrin repeat and BTB/POZ domain-containing protein 1 from Homo sapiens (Human).